Here is a 132-residue protein sequence, read N- to C-terminus: Small ribosomal subunit protein uS8 (132 aa).

Belongs to the universal ribosomal protein uS8 family. In terms of assembly, part of the 30S ribosomal subunit. Contacts proteins S5 and S12.

In terms of biological role, one of the primary rRNA binding proteins, it binds directly to 16S rRNA central domain where it helps coordinate assembly of the platform of the 30S subunit. This chain is Small ribosomal subunit protein uS8, found in Stenotrophomonas maltophilia (strain R551-3).